The primary structure comprises 454 residues: tRNA(Ile)-lysidine synthase (454 aa).

27 to 32 (SGGSDS) is an ATP binding site.

This sequence belongs to the tRNA(Ile)-lysidine synthase family.

The protein localises to the cytoplasm. It catalyses the reaction cytidine(34) in tRNA(Ile2) + L-lysine + ATP = lysidine(34) in tRNA(Ile2) + AMP + diphosphate + H(+). Its function is as follows. Ligates lysine onto the cytidine present at position 34 of the AUA codon-specific tRNA(Ile) that contains the anticodon CAU, in an ATP-dependent manner. Cytidine is converted to lysidine, thus changing the amino acid specificity of the tRNA from methionine to isoleucine. This is tRNA(Ile)-lysidine synthase from Mesorhizobium japonicum (strain LMG 29417 / CECT 9101 / MAFF 303099) (Mesorhizobium loti (strain MAFF 303099)).